We begin with the raw amino-acid sequence, 140 residues long: 3-hydroxyacyl-[acyl-carrier-protein] dehydratase FabZ (140 aa).

Histidine 48 is a catalytic residue.

This sequence belongs to the thioester dehydratase family. FabZ subfamily.

It localises to the cytoplasm. The enzyme catalyses a (3R)-hydroxyacyl-[ACP] = a (2E)-enoyl-[ACP] + H2O. Involved in unsaturated fatty acids biosynthesis. Catalyzes the dehydration of short chain beta-hydroxyacyl-ACPs and long chain saturated and unsaturated beta-hydroxyacyl-ACPs. This Exiguobacterium sibiricum (strain DSM 17290 / CCUG 55495 / CIP 109462 / JCM 13490 / 255-15) protein is 3-hydroxyacyl-[acyl-carrier-protein] dehydratase FabZ.